A 487-amino-acid chain; its full sequence is Cysteine--tRNA ligase (487 aa).

Residue Cys30 coordinates Zn(2+). Positions 32-42 (PTVYGHAHLGH) match the 'HIGH' region motif. 3 residues coordinate Zn(2+): Cys226, His251, and Glu255. The 'KMSKS' region motif lies at 283-287 (KMGKS). Position 286 (Lys286) interacts with ATP.

It belongs to the class-I aminoacyl-tRNA synthetase family. Monomer. Requires Zn(2+) as cofactor.

The protein resides in the cytoplasm. The enzyme catalyses tRNA(Cys) + L-cysteine + ATP = L-cysteinyl-tRNA(Cys) + AMP + diphosphate. The chain is Cysteine--tRNA ligase (cysS) from Chlorobaculum tepidum (strain ATCC 49652 / DSM 12025 / NBRC 103806 / TLS) (Chlorobium tepidum).